The primary structure comprises 291 residues: Elongation factor Ts (291 aa).

Positions threonine 79 to valine 82 are involved in Mg(2+) ion dislocation from EF-Tu.

This sequence belongs to the EF-Ts family.

The protein localises to the cytoplasm. Its function is as follows. Associates with the EF-Tu.GDP complex and induces the exchange of GDP to GTP. It remains bound to the aminoacyl-tRNA.EF-Tu.GTP complex up to the GTP hydrolysis stage on the ribosome. The polypeptide is Elongation factor Ts (Dinoroseobacter shibae (strain DSM 16493 / NCIMB 14021 / DFL 12)).